Consider the following 251-residue polypeptide: Triosephosphate isomerase (251 aa).

Position 12 to 14 (12 to 14 (NWK)) interacts with substrate. Catalysis depends on His-98, which acts as the Electrophile. The active-site Proton acceptor is Glu-168. Substrate contacts are provided by residues Gly-174, Ser-213, and 234–235 (GG).

Belongs to the triosephosphate isomerase family. As to quaternary structure, homodimer.

The protein resides in the cytoplasm. It catalyses the reaction D-glyceraldehyde 3-phosphate = dihydroxyacetone phosphate. The protein operates within carbohydrate biosynthesis; gluconeogenesis. It participates in carbohydrate degradation; glycolysis; D-glyceraldehyde 3-phosphate from glycerone phosphate: step 1/1. Functionally, involved in the gluconeogenesis. Catalyzes stereospecifically the conversion of dihydroxyacetone phosphate (DHAP) to D-glyceraldehyde-3-phosphate (G3P). The chain is Triosephosphate isomerase from Bradyrhizobium diazoefficiens (strain JCM 10833 / BCRC 13528 / IAM 13628 / NBRC 14792 / USDA 110).